The chain runs to 296 residues: NADH-ubiquinone oxidoreductase chain 2 (296 aa).

8 consecutive transmembrane segments (helical) span residues 5–25 (LCLF…GLWL), 49–69 (YFLI…NQSF), 71–91 (FLIP…MWLV), 114–134 (LLGL…SAFI), 167–187 (FFLM…AVIL), 209–229 (ASIS…GFFI), 242–262 (LLVL…FSIA), and 276–296 (KMEI…LFFL).

It belongs to the complex I subunit 2 family.

Its subcellular location is the mitochondrion inner membrane. It carries out the reaction a ubiquinone + NADH + 5 H(+)(in) = a ubiquinol + NAD(+) + 4 H(+)(out). Its function is as follows. Core subunit of the mitochondrial membrane respiratory chain NADH dehydrogenase (Complex I) that is believed to belong to the minimal assembly required for catalysis. Complex I functions in the transfer of electrons from NADH to the respiratory chain. The immediate electron acceptor for the enzyme is believed to be ubiquinone. The sequence is that of NADH-ubiquinone oxidoreductase chain 2 (ND2) from Artemia franciscana (Brine shrimp).